The following is a 173-amino-acid chain: NAD(P)H-quinone oxidoreductase subunit I, chloroplastic (173 aa).

4Fe-4S ferredoxin-type domains follow at residues 55–84 and 95–124; these read GRIHFEFDKCIACEVCVRVCPINLPVVDWD and RSYSIDFGVCIFCGNCVEYCPTNCLSMTEE. [4Fe-4S] cluster contacts are provided by Cys64, Cys67, Cys70, Cys74, Cys104, Cys107, Cys110, and Cys114.

It belongs to the complex I 23 kDa subunit family. NDH is composed of at least 16 different subunits, 5 of which are encoded in the nucleus. [4Fe-4S] cluster serves as cofactor.

It localises to the plastid. The protein resides in the chloroplast thylakoid membrane. The enzyme catalyses a plastoquinone + NADH + (n+1) H(+)(in) = a plastoquinol + NAD(+) + n H(+)(out). It catalyses the reaction a plastoquinone + NADPH + (n+1) H(+)(in) = a plastoquinol + NADP(+) + n H(+)(out). Functionally, NDH shuttles electrons from NAD(P)H:plastoquinone, via FMN and iron-sulfur (Fe-S) centers, to quinones in the photosynthetic chain and possibly in a chloroplast respiratory chain. The immediate electron acceptor for the enzyme in this species is believed to be plastoquinone. Couples the redox reaction to proton translocation, and thus conserves the redox energy in a proton gradient. In Nephroselmis olivacea (Green alga), this protein is NAD(P)H-quinone oxidoreductase subunit I, chloroplastic.